The sequence spans 498 residues: ATP synthase subunit beta, chloroplastic (498 aa).

Position 172–179 (172–179 (GGAGVGKT)) interacts with ATP.

It belongs to the ATPase alpha/beta chains family. F-type ATPases have 2 components, CF(1) - the catalytic core - and CF(0) - the membrane proton channel. CF(1) has five subunits: alpha(3), beta(3), gamma(1), delta(1), epsilon(1). CF(0) has four main subunits: a(1), b(1), b'(1) and c(9-12).

It is found in the plastid. It localises to the chloroplast thylakoid membrane. It carries out the reaction ATP + H2O + 4 H(+)(in) = ADP + phosphate + 5 H(+)(out). Functionally, produces ATP from ADP in the presence of a proton gradient across the membrane. The catalytic sites are hosted primarily by the beta subunits. The chain is ATP synthase subunit beta, chloroplastic from Eucalyptus globulus subsp. globulus (Tasmanian blue gum).